A 581-amino-acid polypeptide reads, in one-letter code: DNA primase (581 aa).

The CHC2-type zinc-finger motif lies at 40 to 64; it reads CPFHNEKTPSFTVNGEKQFYHCFGC. Positions 259-341 constitute a Toprim domain; the sequence is QRLLVVEGYM…GRQVRFMFLP (83 aa). Mg(2+) contacts are provided by Glu265, Asp309, and Asp311.

Belongs to the DnaG primase family. As to quaternary structure, monomer. Interacts with DnaB. The cofactor is Zn(2+). It depends on Mg(2+) as a cofactor.

It catalyses the reaction ssDNA + n NTP = ssDNA/pppN(pN)n-1 hybrid + (n-1) diphosphate.. Functionally, RNA polymerase that catalyzes the synthesis of short RNA molecules used as primers for DNA polymerase during DNA replication. The sequence is that of DNA primase from Salmonella typhimurium (strain LT2 / SGSC1412 / ATCC 700720).